The chain runs to 815 residues: Lon protease 1 (815 aa).

One can recognise a Lon N-terminal domain in the interval Val-12–Ile-205. Gly-358 to Thr-365 contributes to the ATP binding site. The region spanning Thr-594 to Ser-775 is the Lon proteolytic domain. Active-site residues include Ser-681 and Lys-724.

It belongs to the peptidase S16 family. As to quaternary structure, homohexamer. Organized in a ring with a central cavity.

It is found in the cytoplasm. It catalyses the reaction Hydrolysis of proteins in presence of ATP.. Functionally, ATP-dependent serine protease that mediates the selective degradation of mutant and abnormal proteins as well as certain short-lived regulatory proteins. Required for cellular homeostasis and for survival from DNA damage and developmental changes induced by stress. Degrades polypeptides processively to yield small peptide fragments that are 5 to 10 amino acids long. Binds to DNA in a double-stranded, site-specific manner. This Hydrogenovibrio crunogenus (strain DSM 25203 / XCL-2) (Thiomicrospira crunogena) protein is Lon protease 1.